Reading from the N-terminus, the 536-residue chain is CTP synthase (536 aa).

The amidoligase domain stretch occupies residues 1-267 (MSKFVFVTGG…CKETLRCLDL (267 aa)). S13 is a binding site for CTP. Residue S13 participates in UTP binding. ATP-binding positions include 14–19 (SIGKGI) and D71. 2 residues coordinate Mg(2+): D71 and E141. CTP-binding positions include 148 to 150 (DIE), 188 to 193 (KTKPTQ), and K224. Residues 188-193 (KTKPTQ) and K224 each bind UTP. Residues 292–534 (KVALVGKYIE…IKASREKLEQ (243 aa)) enclose the Glutamine amidotransferase type-1 domain. Residue G354 coordinates L-glutamine. The active-site Nucleophile; for glutamine hydrolysis is the C381. Residues 382–385 (LGMQ), E405, and R462 contribute to the L-glutamine site. Active-site residues include H507 and E509.

It belongs to the CTP synthase family. In terms of assembly, homotetramer.

It catalyses the reaction UTP + L-glutamine + ATP + H2O = CTP + L-glutamate + ADP + phosphate + 2 H(+). It carries out the reaction L-glutamine + H2O = L-glutamate + NH4(+). The enzyme catalyses UTP + NH4(+) + ATP = CTP + ADP + phosphate + 2 H(+). Its pathway is pyrimidine metabolism; CTP biosynthesis via de novo pathway; CTP from UDP: step 2/2. Its activity is regulated as follows. Allosterically activated by GTP, when glutamine is the substrate; GTP has no effect on the reaction when ammonia is the substrate. The allosteric effector GTP functions by stabilizing the protein conformation that binds the tetrahedral intermediate(s) formed during glutamine hydrolysis. Inhibited by the product CTP, via allosteric rather than competitive inhibition. Catalyzes the ATP-dependent amination of UTP to CTP with either L-glutamine or ammonia as the source of nitrogen. Regulates intracellular CTP levels through interactions with the four ribonucleotide triphosphates. This chain is CTP synthase, found in Prochlorococcus marinus (strain MIT 9515).